Here is an 875-residue protein sequence, read N- to C-terminus: Phosphoenolpyruvate carboxylase (875 aa).

Active-site residues include His137 and Lys542.

This sequence belongs to the PEPCase type 1 family. Mg(2+) serves as cofactor.

It carries out the reaction oxaloacetate + phosphate = phosphoenolpyruvate + hydrogencarbonate. Forms oxaloacetate, a four-carbon dicarboxylic acid source for the tricarboxylic acid cycle. The sequence is that of Phosphoenolpyruvate carboxylase from Pseudomonas putida (strain ATCC 47054 / DSM 6125 / CFBP 8728 / NCIMB 11950 / KT2440).